Reading from the N-terminus, the 328-residue chain is Ribosomal protein L11 methyltransferase (328 aa).

4 residues coordinate S-adenosyl-L-methionine: T158, G180, D202, and N246.

The protein belongs to the methyltransferase superfamily. PrmA family.

It is found in the cytoplasm. The enzyme catalyses L-lysyl-[protein] + 3 S-adenosyl-L-methionine = N(6),N(6),N(6)-trimethyl-L-lysyl-[protein] + 3 S-adenosyl-L-homocysteine + 3 H(+). Functionally, methylates ribosomal protein L11. This chain is Ribosomal protein L11 methyltransferase, found in Polynucleobacter necessarius subsp. necessarius (strain STIR1).